A 257-amino-acid polypeptide reads, in one-letter code: uncharacterized protein (257 aa).

The helical transmembrane segment at 6 to 26 (IFWLNLAAIIIISIVVSGGMF) threads the bilayer.

The protein belongs to the staphylococcal tandem lipoprotein family.

The protein localises to the cell membrane. This is an uncharacterized protein from Staphylococcus aureus (strain N315).